The following is a 482-amino-acid chain: Methylenetetrahydrofolate--tRNA-(uracil-5-)-methyltransferase TrmFO (482 aa).

11 to 16 (GGGLAG) is a binding site for FAD. The interval 450–482 (LRQPSPWSAEDSPRAALPIPEPTPLGPASGSSE) is disordered.

This sequence belongs to the MnmG family. TrmFO subfamily. FAD is required as a cofactor.

It is found in the cytoplasm. The catalysed reaction is uridine(54) in tRNA + (6R)-5,10-methylene-5,6,7,8-tetrahydrofolate + NADH + H(+) = 5-methyluridine(54) in tRNA + (6S)-5,6,7,8-tetrahydrofolate + NAD(+). It catalyses the reaction uridine(54) in tRNA + (6R)-5,10-methylene-5,6,7,8-tetrahydrofolate + NADPH + H(+) = 5-methyluridine(54) in tRNA + (6S)-5,6,7,8-tetrahydrofolate + NADP(+). Functionally, catalyzes the folate-dependent formation of 5-methyl-uridine at position 54 (M-5-U54) in all tRNAs. The polypeptide is Methylenetetrahydrofolate--tRNA-(uracil-5-)-methyltransferase TrmFO (Rhodospirillum rubrum (strain ATCC 11170 / ATH 1.1.1 / DSM 467 / LMG 4362 / NCIMB 8255 / S1)).